The chain runs to 495 residues: Glycerol kinase (495 aa).

Residue Thr14 coordinates ADP. The ATP site is built by Thr14, Thr15, and Ser16. Position 14 (Thr14) interacts with sn-glycerol 3-phosphate. Residue Arg18 participates in ADP binding. Sn-glycerol 3-phosphate contacts are provided by Arg84, Glu85, Tyr136, and Asp246. Residues Arg84, Glu85, Tyr136, Asp246, and Gln247 each contribute to the glycerol site. Residues Thr268 and Gly312 each coordinate ADP. Positions 268, 312, 316, and 413 each coordinate ATP. Gly413 and Asn417 together coordinate ADP.

This sequence belongs to the FGGY kinase family.

It catalyses the reaction glycerol + ATP = sn-glycerol 3-phosphate + ADP + H(+). It participates in polyol metabolism; glycerol degradation via glycerol kinase pathway; sn-glycerol 3-phosphate from glycerol: step 1/1. Inhibited by fructose 1,6-bisphosphate (FBP). Functionally, key enzyme in the regulation of glycerol uptake and metabolism. Catalyzes the phosphorylation of glycerol to yield sn-glycerol 3-phosphate. This is Glycerol kinase from Bdellovibrio bacteriovorus (strain ATCC 15356 / DSM 50701 / NCIMB 9529 / HD100).